A 226-amino-acid chain; its full sequence is MAFPSVTSVTVENVTFPPTVKPPCSPNTFFLAGAGVRGLQIHHAFVKFTAICIYLQYDALSFLSVKWKTKSTHQLTESDQFFSDIVTGPFEKFMQVTMIKPLTGQQYSEKVAENCVAIWRSLGIYTDSEAEAIDKFLSVFKDLTFPPGSSILFTVSPNGSLTISFSGDETIPEVTSAVIENKLLSEAVLESMIGKNGVSPAAKQSLASRLSHLFKEPGVCDPQSHK.

Substrate is bound by residues threonine 49, asparagine 114, and serine 191.

Belongs to the chalcone isomerase family. As to expression, mostly expressed in flowers, and, to a lower extent, in roots, shoots, and seeds.

The enzyme catalyses a chalcone = a flavanone.. Its pathway is secondary metabolite biosynthesis; flavonoid biosynthesis. In terms of biological role, catalyzes the intramolecular cyclization of bicyclic chalcones into tricyclic (S)-flavanones. Responsible for the isomerization of 4,2',4',6'-tetrahydroxychalcone (also termed chalcone) into naringenin. This Glycine max (Soybean) protein is Chalcone--flavanone isomerase 2-A (CHI2-A).